The primary structure comprises 297 residues: 4,5-DOPA dioxygenase extradiol-like protein (297 aa).

Zn(2+)-binding residues include His30, His82, His205, and His263.

Belongs to the DODA-type extradiol aromatic ring-opening dioxygenase family. Zn(2+) is required as a cofactor.

It localises to the cytoplasm. The protein localises to the nucleus. Its function is as follows. May be involved in the metabolism of aromatic compounds. This chain is 4,5-DOPA dioxygenase extradiol-like protein, found in Schizosaccharomyces pombe (strain 972 / ATCC 24843) (Fission yeast).